A 429-amino-acid chain; its full sequence is MDLLIKGATIITLDGENEVLKGDILIENGKISEISQSIELSKEKMFATKVINAENLIALPGFINAHTHCGQTILRSYADDLPLYEWLFEKIFPAEEKLTKEIVYYSSLLGIAEMLKCGTTMFFDMYFHEDMTAKAALETGIKAVLSRGLQTDERQQQRLDETKELIYNYSSDKIKVFFGPHSVYTCSYELLEKVAELSEEFNTGIMIHLSESEDEVNQCYEKYDMSPVKLCQKAGLFTRPCIAAHCVYVDDEDIEILAENGVTAVYNPTSNLKLGNGFAPVFNLIKSGVNVAIGTDSAASNNNLNILEEIHIAALLEKGMYRLPEILKAQEVLKMATVNAAMAADIHNTGRLKKGFSADIVLIKANDLNMLPCYNTISNIVYSSNPSNVYATIVDGEILYMDGRLLTIDEEALIKEIKSIEKILEESIE.

2 residues coordinate Zn(2+): His66 and His68. Glu95, Arg147, Arg158, and His181 together coordinate substrate. His208 is a Zn(2+) binding site. 2 residues coordinate substrate: Glu211 and Asp296. Asp296 contributes to the Zn(2+) binding site.

This sequence belongs to the metallo-dependent hydrolases superfamily. MTA/SAH deaminase family. Requires Zn(2+) as cofactor.

The catalysed reaction is S-adenosyl-L-homocysteine + H2O + H(+) = S-inosyl-L-homocysteine + NH4(+). The enzyme catalyses S-methyl-5'-thioadenosine + H2O + H(+) = S-methyl-5'-thioinosine + NH4(+). In terms of biological role, catalyzes the deamination of 5-methylthioadenosine and S-adenosyl-L-homocysteine into 5-methylthioinosine and S-inosyl-L-homocysteine, respectively. Is also able to deaminate adenosine. The sequence is that of 5-methylthioadenosine/S-adenosylhomocysteine deaminase from Caldicellulosiruptor saccharolyticus (strain ATCC 43494 / DSM 8903 / Tp8T 6331).